The sequence spans 467 residues: Ribulose bisphosphate carboxylase large chain (467 aa).

The propeptide occupies methionine 1–serine 2. Proline 3 is modified (N-acetylproline). Lysine 14 carries the post-translational modification N6,N6,N6-trimethyllysine. Substrate is bound by residues asparagine 123 and threonine 173. Lysine 175 (proton acceptor) is an active-site residue. Lysine 177 is a binding site for substrate. Positions 201, 203, and 204 each coordinate Mg(2+). Lysine 201 is modified (N6-carboxylysine). Histidine 294 serves as the catalytic Proton acceptor. Residues arginine 295, histidine 327, and serine 379 each contribute to the substrate site.

The protein belongs to the RuBisCO large chain family. Type I subfamily. Heterohexadecamer of 8 large chains and 8 small chains; disulfide-linked. The disulfide link is formed within the large subunit homodimers. Mg(2+) is required as a cofactor. The disulfide bond which can form in the large chain dimeric partners within the hexadecamer appears to be associated with oxidative stress and protein turnover.

Its subcellular location is the plastid. It localises to the chloroplast. The enzyme catalyses 2 (2R)-3-phosphoglycerate + 2 H(+) = D-ribulose 1,5-bisphosphate + CO2 + H2O. The catalysed reaction is D-ribulose 1,5-bisphosphate + O2 = 2-phosphoglycolate + (2R)-3-phosphoglycerate + 2 H(+). Functionally, ruBisCO catalyzes two reactions: the carboxylation of D-ribulose 1,5-bisphosphate, the primary event in carbon dioxide fixation, as well as the oxidative fragmentation of the pentose substrate in the photorespiration process. Both reactions occur simultaneously and in competition at the same active site. This Phoenix reclinata (Senegal date palm) protein is Ribulose bisphosphate carboxylase large chain.